Here is a 196-residue protein sequence, read N- to C-terminus: Imidazoleglycerol-phosphate dehydratase (196 aa).

The protein belongs to the imidazoleglycerol-phosphate dehydratase family.

It localises to the cytoplasm. It catalyses the reaction D-erythro-1-(imidazol-4-yl)glycerol 3-phosphate = 3-(imidazol-4-yl)-2-oxopropyl phosphate + H2O. The protein operates within amino-acid biosynthesis; L-histidine biosynthesis; L-histidine from 5-phospho-alpha-D-ribose 1-diphosphate: step 6/9. The protein is Imidazoleglycerol-phosphate dehydratase of Halobacterium salinarum (strain ATCC 700922 / JCM 11081 / NRC-1) (Halobacterium halobium).